The primary structure comprises 207 residues: Ribosomal RNA small subunit methyltransferase G (207 aa).

Residues glycine 73, leucine 78, 124–125, and arginine 139 contribute to the S-adenosyl-L-methionine site; that span reads VE.

This sequence belongs to the methyltransferase superfamily. RNA methyltransferase RsmG family.

The protein localises to the cytoplasm. The enzyme catalyses guanosine(527) in 16S rRNA + S-adenosyl-L-methionine = N(7)-methylguanosine(527) in 16S rRNA + S-adenosyl-L-homocysteine. Functionally, specifically methylates the N7 position of guanine in position 527 of 16S rRNA. The chain is Ribosomal RNA small subunit methyltransferase G from Salmonella arizonae (strain ATCC BAA-731 / CDC346-86 / RSK2980).